The following is a 426-amino-acid chain: Histidine--tRNA ligase (426 aa).

The protein belongs to the class-II aminoacyl-tRNA synthetase family. Homodimer.

Its subcellular location is the cytoplasm. The enzyme catalyses tRNA(His) + L-histidine + ATP = L-histidyl-tRNA(His) + AMP + diphosphate + H(+). This chain is Histidine--tRNA ligase, found in Shewanella baltica (strain OS195).